The chain runs to 1325 residues: Clustered mitochondria protein homolog (1325 aa).

The region spanning 311-573 (PKHESDPMRT…RHTPMDVTWL (263 aa)) is the Clu domain. Disordered stretches follow at residues 893–937 (KHAE…PLRT), 1032–1063 (DSNQ…DDQL), and 1245–1325 (QHAR…AKRS). Over residues 1265 to 1275 (SAHHHHHRHLH) the composition is skewed to basic residues. Positions 1276-1285 (QQQQNSSSSP) are enriched in low complexity. The span at 1314 to 1325 (AARKRAARAKRS) shows a compositional bias: basic residues.

Belongs to the CLU family. May associate with the eukaryotic translation initiation factor 3 (eIF-3) complex.

The protein localises to the cytoplasm. Its function is as follows. mRNA-binding protein involved in proper cytoplasmic distribution of mitochondria. The polypeptide is Clustered mitochondria protein homolog (Malassezia globosa (strain ATCC MYA-4612 / CBS 7966) (Dandruff-associated fungus)).